The sequence spans 284 residues: Nucleotide-binding protein NMA0948 (284 aa).

8–15 (GLSGSGKS) contacts ATP. 58–61 (DVRS) contacts GTP.

Belongs to the RapZ-like family.

Its function is as follows. Displays ATPase and GTPase activities. The protein is Nucleotide-binding protein NMA0948 of Neisseria meningitidis serogroup A / serotype 4A (strain DSM 15465 / Z2491).